The sequence spans 128 residues: Small ribosomal subunit protein uS12 (128 aa).

The tract at residues 1 to 24 (MPTFNQLVKYGREKRKKKSKAPAL) is disordered. D89 bears the 3-methylthioaspartic acid mark. The segment at 105 to 128 (AGVEGRRQSRSKYGTKRPKEEKGG) is disordered.

It belongs to the universal ribosomal protein uS12 family. As to quaternary structure, part of the 30S ribosomal subunit. Contacts proteins S8 and S17. May interact with IF1 in the 30S initiation complex.

Functionally, with S4 and S5 plays an important role in translational accuracy. In terms of biological role, interacts with and stabilizes bases of the 16S rRNA that are involved in tRNA selection in the A site and with the mRNA backbone. Located at the interface of the 30S and 50S subunits, it traverses the body of the 30S subunit contacting proteins on the other side and probably holding the rRNA structure together. The combined cluster of proteins S8, S12 and S17 appears to hold together the shoulder and platform of the 30S subunit. The sequence is that of Small ribosomal subunit protein uS12 from Aquifex aeolicus (strain VF5).